The primary structure comprises 614 residues: Dihydroxy-acid dehydratase (614 aa).

Aspartate 81 provides a ligand contact to Mg(2+). A [2Fe-2S] cluster-binding site is contributed by cysteine 122. Residues aspartate 123 and lysine 124 each coordinate Mg(2+). Lysine 124 carries the N6-carboxylysine modification. [2Fe-2S] cluster is bound at residue cysteine 193. Residue glutamate 489 coordinates Mg(2+). The active-site Proton acceptor is serine 515.

This sequence belongs to the IlvD/Edd family. In terms of assembly, homodimer. Requires [2Fe-2S] cluster as cofactor. The cofactor is Mg(2+).

It catalyses the reaction (2R)-2,3-dihydroxy-3-methylbutanoate = 3-methyl-2-oxobutanoate + H2O. The enzyme catalyses (2R,3R)-2,3-dihydroxy-3-methylpentanoate = (S)-3-methyl-2-oxopentanoate + H2O. Its pathway is amino-acid biosynthesis; L-isoleucine biosynthesis; L-isoleucine from 2-oxobutanoate: step 3/4. It functions in the pathway amino-acid biosynthesis; L-valine biosynthesis; L-valine from pyruvate: step 3/4. Its function is as follows. Functions in the biosynthesis of branched-chain amino acids. Catalyzes the dehydration of (2R,3R)-2,3-dihydroxy-3-methylpentanoate (2,3-dihydroxy-3-methylvalerate) into 2-oxo-3-methylpentanoate (2-oxo-3-methylvalerate) and of (2R)-2,3-dihydroxy-3-methylbutanoate (2,3-dihydroxyisovalerate) into 2-oxo-3-methylbutanoate (2-oxoisovalerate), the penultimate precursor to L-isoleucine and L-valine, respectively. The chain is Dihydroxy-acid dehydratase from Cellvibrio japonicus (strain Ueda107) (Pseudomonas fluorescens subsp. cellulosa).